The following is a 343-amino-acid chain: F-box/kelch-repeat protein At3g08810 (343 aa).

The span at 1 to 15 (MSYPERKRKRSRWSK) shows a compositional bias: basic residues. A disordered region spans residues 1 to 25 (MSYPERKRKRSRWSKPHSTQNPSPS). Positions 20–66 (QNPSPSLPDDVLLSIFARVSRLYYPTLSHVSESFRSLLASPELYKAR) constitute an F-box domain. Kelch repeat units follow at residues 134–181 (DIYN…VRDG), 183–224 (QGGH…LPDS), and 225–271 (YCVI…VILA).

The sequence is that of F-box/kelch-repeat protein At3g08810 from Arabidopsis thaliana (Mouse-ear cress).